We begin with the raw amino-acid sequence, 591 residues long: CTP synthase 1 (591 aa).

Positions 300–554 (SIALVGKYTK…LAAAGRLQSY (255 aa)) constitute a Glutamine amidotransferase type-1 domain. Catalysis depends on for GATase activity residues Cys399, His526, and Glu528. Phosphoserine occurs at positions 571 and 575.

This sequence belongs to the CTP synthase family.

The enzyme catalyses UTP + L-glutamine + ATP + H2O = CTP + L-glutamate + ADP + phosphate + 2 H(+). The protein operates within pyrimidine metabolism; CTP biosynthesis via de novo pathway; CTP from UDP: step 2/2. Functionally, this enzyme is involved in the de novo synthesis of CTP, a precursor of DNA, RNA and phospholipids. Catalyzes the ATP-dependent amination of UTP to CTP with either L-glutamine or ammonia as a source of nitrogen. This Danio rerio (Zebrafish) protein is CTP synthase 1 (ctps1).